Here is a 402-residue protein sequence, read N- to C-terminus: Protein rds1 (402 aa).

Its function is as follows. May have a function in stress-related responses of the cell. The sequence is that of Protein rds1 (rds1) from Schizosaccharomyces pombe (strain 972 / ATCC 24843) (Fission yeast).